Here is a 250-residue protein sequence, read N- to C-terminus: Archaeal flagellar motor scaffold protein FlaX (250 aa).

Residues 1-9 (MAIQDLLQS) lie on the Extracellular side of the membrane. A helical transmembrane segment spans residues 10-30 (SLFIILIGVGIPIAAFLEILF). Topologically, residues 31–250 (RVILPKTKRV…MILEGGGVNG (220 aa)) are cytoplasmic. Polar residues predominate over residues 42–61 (TQQSPQNISQEQRFPTQQKP). The disordered stretch occupies residues 42–72 (TQQSPQNISQEQRFPTQQKPANDETSKYSSD). Residues 62–72 (ANDETSKYSSD) are compositionally biased toward basic and acidic residues.

As to quaternary structure, the S.acidocaldarius archaellum assembly machinery and its filament consist of seven proteins (FlaB, FlaF, FlaG, FlaH, FlaI, FlaJ and FlaX). FlaX assembles into ring-shaped oligomers. Interacts directly with FlaH and the motor ATPase FlaI.

The protein resides in the archaeal flagellum. It localises to the cell membrane. The presence of the flagellar core components FlaH, FlaI and FlaJ seems to be crucial for the stability of FlaX. In terms of biological role, component of the archaellum. FlaX, FlaH and FlaI form the core cytoplasmic motor complex of the crenarchaeal archaellum. FlaX forms a ring that may act as a membrane-bound cytoplasmic scaffold that guides the assembly of the archaellum motor complex. Is essential for archaellum assembly. In Sulfolobus acidocaldarius (strain ATCC 33909 / DSM 639 / JCM 8929 / NBRC 15157 / NCIMB 11770), this protein is Archaeal flagellar motor scaffold protein FlaX.